A 669-amino-acid polypeptide reads, in one-letter code: Zinc finger MYM-type protein 5 (669 aa).

Glycyl lysine isopeptide (Lys-Gly) (interchain with G-Cter in SUMO2) cross-links involve residues Lys-88, Lys-91, Lys-134, Lys-149, Lys-166, and Lys-225. MYM-type zinc fingers lie at residues 265–299, 311–351, 358–393, and 404–431; these read HLFC…KKAN, QEFY…RHEV, HKLC…KSTG, and KRFC…ASEN. Residues Lys-443, Lys-455, Lys-462, and Lys-552 each participate in a glycyl lysine isopeptide (Lys-Gly) (interchain with G-Cter in SUMO2) cross-link.

Interacts (via N-terminal 120 amino acid region) with ETV5 (via C-terminal).

Its subcellular location is the nucleus. In terms of biological role, functions as a transcriptional regulator. This Homo sapiens (Human) protein is Zinc finger MYM-type protein 5 (ZMYM5).